Reading from the N-terminus, the 982-residue chain is Little elongation complex subunit 2 (982 aa).

Residues Ser17 and Ser326 each carry the phosphoserine modification. Residues 410–427 (TTKVSKSPSPASTSTVPN) show a composition bias toward polar residues. Disordered regions lie at residues 410 to 450 (TTKV…PDIS) and 473 to 504 (GMDGGPEECKNKDDQGFESCEKVSNSDKPLIQ). Basic and acidic residues predominate over residues 479–497 (EECKNKDDQGFESCEKVSN). Phosphoserine is present on Ser571. A Phosphothreonine modification is found at Thr573. 3 disordered regions span residues 595–623 (VGSNLSSRPASPNSSSGQASVGNQTNTAC), 672–697 (ENSKQPSVSEQLSGPSDSSSWPKSGW), and 930–982 (PKSL…RKIT). Residues 597–610 (SNLSSRPASPNSSS) show a composition bias toward low complexity. Polar residues-rich tracts occupy residues 611–623 (GQASVGNQTNTAC) and 672–683 (ENSKQPSVSEQL). The span at 684–697 (SGPSDSSSWPKSGW) shows a compositional bias: low complexity. A compositionally biased stretch (polar residues) spans 956 to 970 (SMETKSSCLPAQQVE).

It belongs to the ICE2 family. Component of the little elongation complex (LEC), at least composed of ELL (ELL, ELL2 or ELL3), ZC3H8, ICE1 and ICE2. Interacts with ICE1 (via C-terminus domain). Interacts with ELL. Expressed at low levels in lung and testis.

It localises to the nucleus. In terms of biological role, component of the little elongation complex (LEC), a complex required to regulate small nuclear RNA (snRNA) gene transcription by RNA polymerase II and III. The polypeptide is Little elongation complex subunit 2 (ICE2) (Homo sapiens (Human)).